The primary structure comprises 338 residues: Anthranilate phosphoribosyltransferase (338 aa).

5-phospho-alpha-D-ribose 1-diphosphate-binding positions include glycine 81, 84 to 85 (GD), serine 89, 91 to 94 (NVST), 109 to 117 (KHGNRALSS), and alanine 121. Glycine 81 is an anthranilate binding site. Mg(2+) is bound at residue serine 93. Asparagine 112 provides a ligand contact to anthranilate. Anthranilate is bound at residue arginine 167. Positions 226 and 227 each coordinate Mg(2+).

Belongs to the anthranilate phosphoribosyltransferase family. As to quaternary structure, homodimer. Mg(2+) serves as cofactor.

It catalyses the reaction N-(5-phospho-beta-D-ribosyl)anthranilate + diphosphate = 5-phospho-alpha-D-ribose 1-diphosphate + anthranilate. It functions in the pathway amino-acid biosynthesis; L-tryptophan biosynthesis; L-tryptophan from chorismate: step 2/5. In terms of biological role, catalyzes the transfer of the phosphoribosyl group of 5-phosphorylribose-1-pyrophosphate (PRPP) to anthranilate to yield N-(5'-phosphoribosyl)-anthranilate (PRA). This is Anthranilate phosphoribosyltransferase from Rhodopseudomonas palustris (strain HaA2).